We begin with the raw amino-acid sequence, 280 residues long: UPF0494 membrane protein SPAC212.01c (280 aa).

Helical transmembrane passes span 107-127 (WPLL…KFEV), 144-164 (IWVP…SLIF), 178-198 (VIIA…GMII), and 199-219 (AALG…LYFG).

Belongs to the UPF0494 family.

Its subcellular location is the membrane. The chain is UPF0494 membrane protein SPAC212.01c from Schizosaccharomyces pombe (strain 972 / ATCC 24843) (Fission yeast).